The chain runs to 272 residues: 3-methyl-2-oxobutanoate hydroxymethyltransferase (272 aa).

The Mg(2+) site is built by Asp54 and Asp93. Residues 54–55 (DS), Asp93, and Lys123 each bind 3-methyl-2-oxobutanoate. A Mg(2+)-binding site is contributed by Glu125. Glu190 acts as the Proton acceptor in catalysis.

The protein belongs to the PanB family. As to quaternary structure, homodecamer; pentamer of dimers. It depends on Mg(2+) as a cofactor.

The protein localises to the cytoplasm. The catalysed reaction is 3-methyl-2-oxobutanoate + (6R)-5,10-methylene-5,6,7,8-tetrahydrofolate + H2O = 2-dehydropantoate + (6S)-5,6,7,8-tetrahydrofolate. It functions in the pathway cofactor biosynthesis; (R)-pantothenate biosynthesis; (R)-pantoate from 3-methyl-2-oxobutanoate: step 1/2. Functionally, catalyzes the reversible reaction in which hydroxymethyl group from 5,10-methylenetetrahydrofolate is transferred onto alpha-ketoisovalerate to form ketopantoate. The sequence is that of 3-methyl-2-oxobutanoate hydroxymethyltransferase from Tropheryma whipplei (strain Twist) (Whipple's bacillus).